The chain runs to 222 residues: Small ribosomal subunit protein eS8z (222 aa).

2 disordered regions span residues methionine 1–lysine 37 and lysine 125–proline 147. Residues isoleucine 8–lysine 26 are compositionally biased toward basic residues.

The protein belongs to the eukaryotic ribosomal protein eS8 family.

This chain is Small ribosomal subunit protein eS8z (RPS8A), found in Arabidopsis thaliana (Mouse-ear cress).